A 308-amino-acid chain; its full sequence is Cysteine proteinase 3 (308 aa).

The signal sequence occupies residues 1 to 13; the sequence is MFALILFVSLACA. The propeptide at 14 to 92 is activation peptide; sequence NEVAFKQWAA…TSNVKAAVKA (79 aa). 2 cysteine pairs are disulfide-bonded: Cys112/Cys153 and Cys146/Cys186. Cys115 is a catalytic residue. Active-site residues include His251 and Asn271.

It belongs to the peptidase C1 family.

The protein resides in the cytoplasm. It localises to the cytoplasmic vesicle. The protein localises to the phagosome. The enzyme catalyses Hydrolysis of proteins, including basement membrane collagen and azocasein. Preferential cleavage: Arg-Arg-|-Xaa in small molecule substrates including Z-Arg-Arg-|-NHMec.. In terms of biological role, cysteine protease which may be involved in pathogenicity. The polypeptide is Cysteine proteinase 3 (Entamoeba histolytica (strain ATCC 30459 / HM-1:IMSS / ABRM)).